The sequence spans 1132 residues: Telomerase reverse transcriptase (1132 aa).

The interval 1–66 (MSAKKPVQSK…NQNNANSGGN (66 aa)) is disordered. Composition is skewed to polar residues over residues 9–26 (SKLN…NRST) and 45–55 (QSQNTTTGAFR). A Reverse transcriptase domain is found at 602–956 (KEMRIFCESQ…DLFHWIGISI (355 aa)). Mg(2+)-binding residues include Asp708, Asp886, and Asp887.

The protein belongs to the reverse transcriptase family. Telomerase subfamily.

It is found in the nucleus. The protein resides in the chromosome. The protein localises to the telomere. The catalysed reaction is DNA(n) + a 2'-deoxyribonucleoside 5'-triphosphate = DNA(n+1) + diphosphate. Telomerase is a ribonucleoprotein enzyme essential for the replication of chromosome termini in most eukaryotes. It elongates telomeres. It is a reverse transcriptase that adds simple sequence repeats to chromosome ends by copying a template sequence within the RNA component of the enzyme. The polypeptide is Telomerase reverse transcriptase (TERT) (Oxytricha trifallax (Sterkiella histriomuscorum)).